Reading from the N-terminus, the 913-residue chain is Tyrosine-protein phosphatase non-receptor type 3 (913 aa).

An FERM domain is found at 29-312 (VICSIRFLDG…EHHSFFQAKK (284 aa)). Residues Ser-357, Ser-359, and Ser-367 each carry the phosphoserine modification. Disordered regions lie at residues 364–400 (ETKS…DNLA) and 417–473 (KGPL…PDGV). Thr-376 carries the post-translational modification Phosphothreonine. Ser-381 is subject to Phosphoserine. A compositionally biased stretch (basic residues) spans 382–393 (PRLRHEIRKPRH). Ser-425 bears the Phosphoserine mark. Polar residues predominate over residues 441–453 (SENNPAQSCLTQK). Low complexity predominate over residues 454–470 (SSSSVSPSSNAPGSCSP). In terms of domain architecture, PDZ spans 510 to 582 (LIRITPDEEG…DQVVMFIKAS (73 aa)). The Tyrosine-protein phosphatase domain maps to 646–901 (VLIQFEQLYR…KFVCEAILRV (256 aa)). Substrate-binding positions include Asp-811, 842–848 (CSAGIGR), and Gln-886. Cys-842 (phosphocysteine intermediate) is an active-site residue.

It belongs to the protein-tyrosine phosphatase family. Non-receptor class subfamily.

Its subcellular location is the cell membrane. It localises to the cytoplasm. The protein localises to the cytoskeleton. The catalysed reaction is O-phospho-L-tyrosyl-[protein] + H2O = L-tyrosyl-[protein] + phosphate. May act at junctions between the membrane and the cytoskeleton. The polypeptide is Tyrosine-protein phosphatase non-receptor type 3 (Ptpn3) (Mus musculus (Mouse)).